The chain runs to 236 residues: 15,16-dihydrobiliverdin:ferredoxin oxidoreductase (236 aa).

This sequence belongs to the HY2 family.

It catalyses the reaction 15,16-dihydrobiliverdin + oxidized 2[4Fe-4S]-[ferredoxin] = biliverdin IXalpha + reduced 2[4Fe-4S]-[ferredoxin] + 2 H(+). Its function is as follows. Catalyzes the two-electron reduction of biliverdin IX-alpha at the C15 methine bridge. The protein is 15,16-dihydrobiliverdin:ferredoxin oxidoreductase of Prochlorococcus marinus (strain MIT 9515).